We begin with the raw amino-acid sequence, 146 residues long: Snaclec coagulation factor IX/factor X-binding protein subunit B (146 aa).

A signal peptide spans 1-23 (MGRFIFMSFGFLVVFLSLSGTAA). A C-type lectin domain is found at 24-146 (DCPSDWSSYE…MAQFVCEFQA (123 aa)). Intrachain disulfides connect C25/C36, C53/C142, and C119/C134. The Ca(2+) site is built by S64, Q66, and E70. E143 contributes to the Ca(2+) binding site.

Belongs to the snaclec family. Heterodimer with subunit A of IX/X-bp or IX-bp; disulfide-linked. Expressed by the venom gland.

It localises to the secreted. When linked to subunit A of IX/X-bp, anticoagulant protein which binds to the gamma-carboxyglutamic acid-domain regions of factors IX (F9) and factor X (10) in the presence of calcium with a 1 to 1 stoichiometry. In terms of biological role, when linked to subunit A of IX-bp, anticoagulant protein which binds to the gamma-carboxyglutamic acid-domain regions of factor IX (but not to factor X) in the presence of calcium with a 1 to 1 stoichiometry. This Protobothrops flavoviridis (Habu) protein is Snaclec coagulation factor IX/factor X-binding protein subunit B.